A 145-amino-acid polypeptide reads, in one-letter code: Large ribosomal subunit protein uL15 (145 aa).

The segment at 1 to 57 (MKLNDLSPAPGSRREKHRPGRGIGSGLGKTGGRGHKGQTSRSGGTIAPGFEGGQQPL) is disordered. Gly residues predominate over residues 21 to 31 (RGIGSGLGKTG).

Belongs to the universal ribosomal protein uL15 family. Part of the 50S ribosomal subunit.

Functionally, binds to the 23S rRNA. This Pseudomonas fluorescens (strain SBW25) protein is Large ribosomal subunit protein uL15.